The sequence spans 627 residues: MSLDISKYPILALANTPDELRSLPKESLPALCDELRTYLLNSVSKTSGHLASGLGVVELTVALHYVYNTPFDQLIWDVGHQAYPHKILTGRREQLSTIRQKDGLHPFPWRGESEYDVLSVGHSSTSISAALGLAICAEKEQENRKIVSVIGDGAITAGMAFEALNHAGDIHPDMLVVLNDNEMSISENVGALNNQLARVLSGSLYTSIREGGKKVLSGTPTIKELLKRTEEHLKGMVVPGTMFEELGFNYIGPVDGHDVNELVRTLKNMRNLKGPQFLHIMTKKGKGYEPAEKDPISYHGVPKFDPSNTSLPKSSGGKPTFSAVFGDFLCDMAKEDSKLMAITPAMREGSGMVRFSKEYPNQYFDAAIAEQHAVTLASGMAIAGYNPIVAIYSTFLQRGYDQLIHDVAIMDLPVMFAIDRAGLVGADGQTHQGAFDISFMRCIPNMVIMTPSDENECRQMLYTGHKHTGPSAVRYPRGSATGIQVNNEMQALEIGKGRLLRETKVTEKGERVAILNFGTFLANSLEAAEKLDATVADMRFAKPLDEALICELVTNHDVLVTIEENAISGGAGSGVIEFLMKNRLVKPVLQLGLPDEFIAQGTQEEMHTELKLDANGIEQQIRDYLDL.

Thiamine diphosphate-binding positions include histidine 80 and 121–123 (GHS). Residue aspartate 152 participates in Mg(2+) binding. Thiamine diphosphate-binding positions include 153-154 (GA), asparagine 181, tyrosine 288, and glutamate 370. Mg(2+) is bound at residue asparagine 181.

This sequence belongs to the transketolase family. DXPS subfamily. Homodimer. Mg(2+) serves as cofactor. Thiamine diphosphate is required as a cofactor.

The enzyme catalyses D-glyceraldehyde 3-phosphate + pyruvate + H(+) = 1-deoxy-D-xylulose 5-phosphate + CO2. It functions in the pathway metabolic intermediate biosynthesis; 1-deoxy-D-xylulose 5-phosphate biosynthesis; 1-deoxy-D-xylulose 5-phosphate from D-glyceraldehyde 3-phosphate and pyruvate: step 1/1. In terms of biological role, catalyzes the acyloin condensation reaction between C atoms 2 and 3 of pyruvate and glyceraldehyde 3-phosphate to yield 1-deoxy-D-xylulose-5-phosphate (DXP). This is 1-deoxy-D-xylulose-5-phosphate synthase from Aliivibrio fischeri (strain ATCC 700601 / ES114) (Vibrio fischeri).